The sequence spans 278 residues: Sulfur carrier protein FdhD (278 aa).

Residue Cys121 is the Cysteine persulfide intermediate of the active site. Position 260–265 (260–265 (FCKPGR)) interacts with Mo-bis(molybdopterin guanine dinucleotide).

This sequence belongs to the FdhD family.

The protein resides in the cytoplasm. Required for formate dehydrogenase (FDH) activity. Acts as a sulfur carrier protein that transfers sulfur from IscS to the molybdenum cofactor prior to its insertion into FDH. This chain is Sulfur carrier protein FdhD, found in Salmonella newport (strain SL254).